We begin with the raw amino-acid sequence, 113 residues long: Regulator of rDNA transcription protein 7 (113 aa).

2 helical membrane passes run 13–35 (FLPI…LFYN) and 70–92 (FLLG…LLFL).

Its subcellular location is the membrane. Identified in a screen for mutants with decreased levels of rDNA transcription. The chain is Regulator of rDNA transcription protein 7 (RRT7) from Saccharomyces cerevisiae (strain ATCC 204508 / S288c) (Baker's yeast).